A 74-amino-acid polypeptide reads, in one-letter code: ATP synthase subunit c (74 aa).

2 consecutive transmembrane segments (helical) span residues 8–28 (FIGV…VSNI) and 52–72 (IGAG…MLLI).

The protein belongs to the ATPase C chain family. As to quaternary structure, F-type ATPases have 2 components, F(1) - the catalytic core - and F(0) - the membrane proton channel. F(1) has five subunits: alpha(3), beta(3), gamma(1), delta(1), epsilon(1). F(0) has three main subunits: a(1), b(2) and c(10-14). The alpha and beta chains form an alternating ring which encloses part of the gamma chain. F(1) is attached to F(0) by a central stalk formed by the gamma and epsilon chains, while a peripheral stalk is formed by the delta and b chains.

The protein localises to the cell inner membrane. In terms of biological role, f(1)F(0) ATP synthase produces ATP from ADP in the presence of a proton or sodium gradient. F-type ATPases consist of two structural domains, F(1) containing the extramembraneous catalytic core and F(0) containing the membrane proton channel, linked together by a central stalk and a peripheral stalk. During catalysis, ATP synthesis in the catalytic domain of F(1) is coupled via a rotary mechanism of the central stalk subunits to proton translocation. Functionally, key component of the F(0) channel; it plays a direct role in translocation across the membrane. A homomeric c-ring of between 10-14 subunits forms the central stalk rotor element with the F(1) delta and epsilon subunits. In Rickettsia canadensis (strain McKiel), this protein is ATP synthase subunit c.